A 541-amino-acid polypeptide reads, in one-letter code: Pseudokinase FAM20A (541 aa).

The N-terminal stretch at 1–33 is a signal peptide; sequence MPGLRRDRLLALLLLGALFSADLYFHLWPQVQR. Residues asparagine 70, asparagine 145, and asparagine 287 are each glycosylated (N-linked (GlcNAc...) asparagine). Intrachain disulfides connect cysteine 314–cysteine 330, cysteine 319–cysteine 323, cysteine 378–cysteine 452, and cysteine 453–cysteine 512. N-linked (GlcNAc...) asparagine glycosylation occurs at asparagine 388. Asparagine 538 carries N-linked (GlcNAc...) asparagine glycosylation.

This sequence belongs to the FAM20 family. In terms of assembly, interacts with FAM20C; probably forming a heterotetramer of 2 subunits of FAM20A and 2 subunits of FAM20C. Post-translationally, N-glycosylated. In terms of tissue distribution, in the mammary gland, expressed at higher levels in lactating mice than in virgin mice. Observed throughout the tissues of the mandibular incisor, including the secretory and maturation stage ameloblasts, the suprabasal layers of the gingival epithelium and the odontoblasts. Weak expression in the enamel matrix.

It localises to the secreted. It is found in the golgi apparatus. The protein resides in the endoplasmic reticulum. Functionally, pseudokinase that acts as an allosteric activator of the Golgi serine/threonine protein kinase FAM20C and is involved in biomineralization of teeth. Forms a complex with FAM20C and increases the ability of FAM20C to phosphorylate the proteins that form the 'matrix' that guides the deposition of the enamel minerals. The polypeptide is Pseudokinase FAM20A (Mus musculus (Mouse)).